Here is an 89-residue protein sequence, read N- to C-terminus: Small ribosomal subunit protein uS15 (89 aa).

Belongs to the universal ribosomal protein uS15 family. In terms of assembly, part of the 30S ribosomal subunit. Forms a bridge to the 50S subunit in the 70S ribosome, contacting the 23S rRNA.

In terms of biological role, one of the primary rRNA binding proteins, it binds directly to 16S rRNA where it helps nucleate assembly of the platform of the 30S subunit by binding and bridging several RNA helices of the 16S rRNA. Functionally, forms an intersubunit bridge (bridge B4) with the 23S rRNA of the 50S subunit in the ribosome. The chain is Small ribosomal subunit protein uS15 from Prochlorococcus marinus (strain MIT 9515).